The primary structure comprises 335 residues: Transcriptional activator NphR (335 aa).

The 99-residue stretch at 231-329 (TRVQRVIEQN…GSSPGLYRKE (99 aa)) folds into the HTH araC/xylS-type domain. 2 consecutive DNA-binding regions (H-T-H motif) follow at residues 249-270 (SDIA…NAEG) and 296-319 (VADV…RSTF).

In terms of biological role, transcriptional activator of nphA1 and nphA2 involved in the degradation of 4-nitrophenol (4-NP). This is Transcriptional activator NphR (nphR) from Rhodococcus sp.